We begin with the raw amino-acid sequence, 135 residues long: Large-conductance mechanosensitive channel (135 aa).

Transmembrane regions (helical) follow at residues 10–30 (FAMR…GAFG) and 76–96 (GSFI…FCVI).

The protein belongs to the MscL family. Homopentamer.

Its subcellular location is the cell inner membrane. Its function is as follows. Channel that opens in response to stretch forces in the membrane lipid bilayer. May participate in the regulation of osmotic pressure changes within the cell. This is Large-conductance mechanosensitive channel from Campylobacter concisus (strain 13826).